The primary structure comprises 446 residues: MTEQKRKLEKLTGVKGMNDILPQDAGLWEFFEATVKSLLRAYGYQNIRTPIVEHTQLFTRGIGEVTDIVEKEMYSFVDALNGENLTLRPENTAAVVRAAIEHNMLYDGPKRLWYLGPMFRHERPQRGRYRQFHQVGVEALGFAGPDADAEIIMMCQRLWDDLGLTGIKLEINSLGLAEERAAHRVELIKYLEQHVDKLDDDAQRRLYTNPLRVLDTKNPALQEIVRNAPQLIDFLGDVSRAHFDGLQRLLKANNLPFTINPRLVRGLDYYNLTVFEWVTDKLGAQGTVAAGGRYDPLIEQLGGKPTAACGWAMGVERILELLKEEHLVPEQEGVDVYVVHQGDAAREQAFIVAERLRDTGLDVILHCSADGAGASFKSQMKRADASGAAFAVIFGEDEVANGTVSVKPLRGTGAEGEKNVQQSVPVESLTEFLINAMVATAEDGDD.

Belongs to the class-II aminoacyl-tRNA synthetase family. Homodimer.

Its subcellular location is the cytoplasm. The enzyme catalyses tRNA(His) + L-histidine + ATP = L-histidyl-tRNA(His) + AMP + diphosphate + H(+). The sequence is that of Histidine--tRNA ligase from Burkholderia pseudomallei (strain K96243).